Consider the following 303-residue polypeptide: Methionyl-tRNA formyltransferase (303 aa).

Position 109–112 (109–112 (SLLP)) interacts with (6S)-5,6,7,8-tetrahydrofolate.

It belongs to the Fmt family.

It carries out the reaction L-methionyl-tRNA(fMet) + (6R)-10-formyltetrahydrofolate = N-formyl-L-methionyl-tRNA(fMet) + (6S)-5,6,7,8-tetrahydrofolate + H(+). In terms of biological role, attaches a formyl group to the free amino group of methionyl-tRNA(fMet). The formyl group appears to play a dual role in the initiator identity of N-formylmethionyl-tRNA by promoting its recognition by IF2 and preventing the misappropriation of this tRNA by the elongation apparatus. This chain is Methionyl-tRNA formyltransferase, found in Helicobacter pylori (strain ATCC 700392 / 26695) (Campylobacter pylori).